A 575-amino-acid polypeptide reads, in one-letter code: GBF-interacting protein 1-like (575 aa).

Disordered regions lie at residues 66–171 (SKRE…SKSD) and 229–296 (SSSN…VVHS). Polar residues-rich tracts occupy residues 90 to 102 (FASS…SGRN), 115 to 138 (TRGS…NETK), and 161 to 171 (ISASRCSSKSD). The segment covering 268–281 (AREETSTVSEDKDY) has biased composition (basic and acidic residues).

Belongs to the GIP1 family. As to expression, expressed in roots, leaves, stems and flowers.

It localises to the nucleus. Functionally, may act as a transcriptional coactivator of LOB domain-containing proteins. The polypeptide is GBF-interacting protein 1-like (Arabidopsis thaliana (Mouse-ear cress)).